Reading from the N-terminus, the 90-residue chain is Small ribosomal subunit protein bS20 (90 aa).

This sequence belongs to the bacterial ribosomal protein bS20 family.

Binds directly to 16S ribosomal RNA. The sequence is that of Small ribosomal subunit protein bS20 from Roseiflexus sp. (strain RS-1).